A 74-amino-acid polypeptide reads, in one-letter code: Capsid protein VP2 (74 aa).

Its subcellular location is the virion. Functionally, this extremely basic protein may tightly bind to SSV1 DNA. Essential for virus function. In Saccharolobus solfataricus (Sulfolobus solfataricus), this protein is Capsid protein VP2 (VP2).